A 422-amino-acid chain; its full sequence is Histidine--tRNA ligase (422 aa).

The protein belongs to the class-II aminoacyl-tRNA synthetase family. As to quaternary structure, homodimer.

It localises to the cytoplasm. The catalysed reaction is tRNA(His) + L-histidine + ATP = L-histidyl-tRNA(His) + AMP + diphosphate + H(+). The protein is Histidine--tRNA ligase of Lysinibacillus sphaericus (strain C3-41).